The primary structure comprises 136 residues: Large ribosomal subunit protein uL16 (136 aa).

The protein belongs to the universal ribosomal protein uL16 family. As to quaternary structure, part of the 50S ribosomal subunit.

Its function is as follows. Binds 23S rRNA and is also seen to make contacts with the A and possibly P site tRNAs. The protein is Large ribosomal subunit protein uL16 of Rickettsia prowazekii (strain Madrid E).